Reading from the N-terminus, the 454-residue chain is tRNA modification GTPase MnmE (454 aa).

3 residues coordinate (6S)-5-formyl-5,6,7,8-tetrahydrofolate: arginine 23, glutamate 80, and lysine 120. One can recognise a TrmE-type G domain in the interval 216 to 377 (GMKVVIAGRP…LRNHLKQSMG (162 aa)). A K(+)-binding site is contributed by asparagine 226. Residues 226 to 231 (NAGKSS), 245 to 251 (TDIAGTT), 270 to 273 (DTAG), 335 to 338 (NKAD), and 358 to 360 (SAR) contribute to the GTP site. Serine 230 lines the Mg(2+) pocket. Positions 245, 247, and 250 each coordinate K(+). Mg(2+) is bound at residue threonine 251. A (6S)-5-formyl-5,6,7,8-tetrahydrofolate-binding site is contributed by lysine 454.

The protein belongs to the TRAFAC class TrmE-Era-EngA-EngB-Septin-like GTPase superfamily. TrmE GTPase family. In terms of assembly, homodimer. Heterotetramer of two MnmE and two MnmG subunits. K(+) serves as cofactor.

It is found in the cytoplasm. Its function is as follows. Exhibits a very high intrinsic GTPase hydrolysis rate. Involved in the addition of a carboxymethylaminomethyl (cmnm) group at the wobble position (U34) of certain tRNAs, forming tRNA-cmnm(5)s(2)U34. The sequence is that of tRNA modification GTPase MnmE from Enterobacter sp. (strain 638).